The sequence spans 142 residues: MKTFTAKPETVKRDWYVVDANGKTLGRLATELARRLRGKHKAEYTPHVDTGDYIIVLNADKVAVTGNKRNDKIYYHHTGHIGGIKQATFEEMIARRPERVIEIAVKGMLPKGPLGRAMFRKLKVYAGTEHNHAAQQPQVLDI.

It belongs to the universal ribosomal protein uL13 family. As to quaternary structure, part of the 50S ribosomal subunit.

Its function is as follows. This protein is one of the early assembly proteins of the 50S ribosomal subunit, although it is not seen to bind rRNA by itself. It is important during the early stages of 50S assembly. This chain is Large ribosomal subunit protein uL13, found in Pectobacterium carotovorum subsp. carotovorum (strain PC1).